Here is a 422-residue protein sequence, read N- to C-terminus: 5'-deoxyadenosine deaminase (422 aa).

Positions 57 and 59 each coordinate Zn(2+). Positions 86 and 178 each coordinate substrate. His-205 provides a ligand contact to Zn(2+). Substrate contacts are provided by Glu-208 and Asp-294. Asp-294 contacts Zn(2+).

Belongs to the metallo-dependent hydrolases superfamily. MTA/SAH deaminase family. Homotetramer. Requires Zn(2+) as cofactor.

The catalysed reaction is 5'-deoxyadenosine + H2O + H(+) = 5'-deoxyinosine + NH4(+). The enzyme catalyses S-adenosyl-L-homocysteine + H2O + H(+) = S-inosyl-L-homocysteine + NH4(+). It carries out the reaction S-methyl-5'-thioadenosine + H2O + H(+) = S-methyl-5'-thioinosine + NH4(+). It catalyses the reaction adenosine + H2O + H(+) = inosine + NH4(+). It participates in amino-acid biosynthesis; S-adenosyl-L-methionine biosynthesis. Its function is as follows. Catalyzes the deamination of three SAM-derived enzymatic products, namely 5'-deoxyadenosine, S-adenosyl-L-homocysteine, and 5'-methylthioadenosine, to produce the inosine analogs. Can also deaminate adenosine. The preferred substrate for this enzyme is 5'-deoxyadenosine, but all these substrates are efficiently deaminated. Likely functions in a S-adenosyl-L-methionine (SAM) recycling pathway from S-adenosyl-L-homocysteine (SAH) produced from SAM-dependent methylation reactions. May also be involved in the recycling of 5'-deoxyadenosine, whereupon the 5'-deoxyribose moiety of 5'-deoxyinosine is further metabolized to deoxyhexoses used for the biosynthesis of aromatic amino acids in methanogens. In Methanococcus maripaludis (strain C5 / ATCC BAA-1333), this protein is 5'-deoxyadenosine deaminase.